Consider the following 446-residue polypeptide: Probable cytosolic iron-sulfur protein assembly protein 1 (446 aa).

WD repeat units lie at residues 17–59 (AFKP…AHSN), 63–106 (GHTR…PLEE), 143–182 (GHEN…EGDD), 192–241 (EHDG…EWAC), 247–291 (GHSS…PEAS), 330–368 (VHTR…NPST), and 398–446 (GHGP…SIEL). Residues 106–128 (EGTKKGESTEIDVTRRRNNNDSD) show a composition bias toward basic and acidic residues. Residues 106–133 (EGTKKGESTEIDVTRRRNNNDSDKDNDD) form a disordered region.

The protein belongs to the WD repeat CIA1 family.

Essential component of the cytosolic iron-sulfur (Fe/S) protein assembly machinery. Required for the maturation of extramitochondrial Fe/S proteins. This chain is Probable cytosolic iron-sulfur protein assembly protein 1, found in Pyricularia oryzae (strain 70-15 / ATCC MYA-4617 / FGSC 8958) (Rice blast fungus).